We begin with the raw amino-acid sequence, 275 residues long: 3-methyl-2-oxobutanoate hydroxymethyltransferase (275 aa).

D49 and D88 together coordinate Mg(2+). 3-methyl-2-oxobutanoate-binding positions include 49–50 (DS), D88, and K118. E120 contributes to the Mg(2+) binding site. The active-site Proton acceptor is E187.

Belongs to the PanB family. In terms of assembly, homodecamer; pentamer of dimers. Requires Mg(2+) as cofactor.

The protein resides in the cytoplasm. The enzyme catalyses 3-methyl-2-oxobutanoate + (6R)-5,10-methylene-5,6,7,8-tetrahydrofolate + H2O = 2-dehydropantoate + (6S)-5,6,7,8-tetrahydrofolate. Its pathway is cofactor biosynthesis; (R)-pantothenate biosynthesis; (R)-pantoate from 3-methyl-2-oxobutanoate: step 1/2. In terms of biological role, catalyzes the reversible reaction in which hydroxymethyl group from 5,10-methylenetetrahydrofolate is transferred onto alpha-ketoisovalerate to form ketopantoate. This Bartonella henselae (strain ATCC 49882 / DSM 28221 / CCUG 30454 / Houston 1) (Rochalimaea henselae) protein is 3-methyl-2-oxobutanoate hydroxymethyltransferase.